The following is a 353-amino-acid chain: UDP-3-O-acylglucosamine N-acyltransferase (353 aa).

The active-site Proton acceptor is His-258.

This sequence belongs to the transferase hexapeptide repeat family. LpxD subfamily. In terms of assembly, homotrimer.

It catalyses the reaction a UDP-3-O-[(3R)-3-hydroxyacyl]-alpha-D-glucosamine + a (3R)-hydroxyacyl-[ACP] = a UDP-2-N,3-O-bis[(3R)-3-hydroxyacyl]-alpha-D-glucosamine + holo-[ACP] + H(+). It participates in bacterial outer membrane biogenesis; LPS lipid A biosynthesis. Catalyzes the N-acylation of UDP-3-O-acylglucosamine using 3-hydroxyacyl-ACP as the acyl donor. Is involved in the biosynthesis of lipid A, a phosphorylated glycolipid that anchors the lipopolysaccharide to the outer membrane of the cell. In Parvibaculum lavamentivorans (strain DS-1 / DSM 13023 / NCIMB 13966), this protein is UDP-3-O-acylglucosamine N-acyltransferase.